The primary structure comprises 246 residues: Uridylate kinase (246 aa).

18–21 (KVSG) lines the ATP pocket. G60 provides a ligand contact to UMP. The ATP site is built by G61 and R65. UMP contacts are provided by residues D80 and 141–148 (TGNPFFTT). ATP contacts are provided by T168, Q169, Y174, and D177.

It belongs to the UMP kinase family. Homohexamer.

It localises to the cytoplasm. The enzyme catalyses UMP + ATP = UDP + ADP. Its pathway is pyrimidine metabolism; CTP biosynthesis via de novo pathway; UDP from UMP (UMPK route): step 1/1. Inhibited by UTP. Catalyzes the reversible phosphorylation of UMP to UDP. In Gluconobacter oxydans (strain 621H) (Gluconobacter suboxydans), this protein is Uridylate kinase.